A 365-amino-acid chain; its full sequence is MFRLLRWRLGRTLLRAAGRRCGGCTARLLPERTGDAGTGAERLRTRGAPARGHGVLPLLAALAWFSRPAATAEQPGEDASDEAEAEIIQLLKQAKLSIMKDEPEAAELILHDALRLAYESDNRKAITYTYDLMANLAFIRGQLENAEQLFKATMSYLLGGGMKQEDNAIIEISLKLANIYAAQNKQEFALAGYEFCISTLEGKIEREKELAEDIMSEETANTYLLLGMCLDSCARYLLFSKQLSQAQRMYEKALQICQEIQGERHPQTIVLMSDLATTLDAQGHFDDAYIYMQRASDLAREINHPELHMVLSNLAAILIHRERYTQAKEIYQEALKRAELKRDEVSVQHIREELAELSRKSRRLT.

A mitochondrion-targeting transit peptide spans 1–52 (MFRLLRWRLGRTLLRAAGRRCGGCTARLLPERTGDAGTGAERLRTRGAPARG). 4 TPR repeats span residues 127–160 (TYTY…LLGG), 220–260 (ANTY…CQEI), 269–302 (IVLM…AREI), and 308–341 (HMVL…AELK).

The protein belongs to the TTC19 family. As to quaternary structure, binds to the mature mitochondrial complex III dimer, after the incorporation of the Rieske protein UQCRFS1. Interacts with UQCRC1 and UQCRFS1. Interacts with ZFYVE26 and CHMP4B. In terms of processing, proteolytically cleaved by PARL.

Its subcellular location is the mitochondrion inner membrane. In terms of biological role, required for the preservation of the structural and functional integrity of mitochondrial respiratory complex III by allowing the physiological turnover of the Rieske protein UQCRFS1. Involved in the clearance of UQCRFS1 N-terminal fragments, which are produced upon incorporation into the complex III and whose presence is detrimental for its catalytic activity. The chain is Tetratricopeptide repeat protein 19, mitochondrial (Ttc19) from Mus musculus (Mouse).